A 446-amino-acid polypeptide reads, in one-letter code: Adenylosuccinate synthetase (446 aa).

GTP-binding positions include 20–26 (GDEGKGK) and 48–50 (GHT). Catalysis depends on Asp21, which acts as the Proton acceptor. 2 residues coordinate Mg(2+): Asp21 and Gly48. IMP contacts are provided by residues 21–24 (DEGK), 46–49 (NAGH), Thr137, Arg151, Gln232, Thr247, and Arg319. His49 acts as the Proton donor in catalysis. 315–321 (SVTGRPR) is a binding site for substrate. GTP-binding positions include Arg321, 347–349 (KLD), and 429–431 (STG).

Belongs to the adenylosuccinate synthetase family. Homodimer. Requires Mg(2+) as cofactor.

Its subcellular location is the cytoplasm. It carries out the reaction IMP + L-aspartate + GTP = N(6)-(1,2-dicarboxyethyl)-AMP + GDP + phosphate + 2 H(+). It participates in purine metabolism; AMP biosynthesis via de novo pathway; AMP from IMP: step 1/2. Functionally, plays an important role in the de novo pathway of purine nucleotide biosynthesis. Catalyzes the first committed step in the biosynthesis of AMP from IMP. The sequence is that of Adenylosuccinate synthetase from Ralstonia pickettii (strain 12J).